A 104-amino-acid polypeptide reads, in one-letter code: Large ribosomal subunit protein uL24 (104 aa).

Belongs to the universal ribosomal protein uL24 family. Part of the 50S ribosomal subunit.

Its function is as follows. One of two assembly initiator proteins, it binds directly to the 5'-end of the 23S rRNA, where it nucleates assembly of the 50S subunit. In terms of biological role, one of the proteins that surrounds the polypeptide exit tunnel on the outside of the subunit. This Caulobacter vibrioides (strain ATCC 19089 / CIP 103742 / CB 15) (Caulobacter crescentus) protein is Large ribosomal subunit protein uL24.